Here is a 174-residue protein sequence, read N- to C-terminus: Inactive protein RESTRICTED TEV MOVEMENT 1 (174 aa).

A Jacalin-type lectin domain is found at 1–152 (MKIGPVGKHD…LQYIGVYLRP (152 aa)).

This sequence belongs to the jacalin lectin family. As to quaternary structure, self-interacts. Interacts with RTM3.

The protein resides in the cytoplasm. In terms of biological role, unable to mediate restriction of long-distance movement of the pathogenic tobacco etch virus (TEV) without causing a hypersensitive response or inducing systemic acquired resistance. This chain is Inactive protein RESTRICTED TEV MOVEMENT 1 (RTM1), found in Arabidopsis thaliana (Mouse-ear cress).